The following is an 821-amino-acid chain: DNA replication licensing factor MCM6 (821 aa).

M1 carries the post-translational modification N-acetylmethionine. S13, S219, and S271 each carry phosphoserine. Phosphothreonine is present on T278. The 208-residue stretch at 346 to 553 (LYHNLCTSLF…TDYAIARRIV (208 aa)) folds into the MCM domain. Residues H359, S399, T400, A401, K402, S403, and N504 each contribute to the ATP site. Positions 528 to 531 (SRFD) match the Arginine finger motif. Residues R619 and E622 each contribute to the ADP site. K643 carries the N6-acetyllysine modification. The tract at residues 676 to 706 (VDEGPDGINGHADSPAPASGINGHSEDMNQD) is disordered. 2 positions are modified to phosphoserine: S689 and S762. The residue at position 791 (T791) is a Phosphothreonine.

Belongs to the MCM family. Component of the MCM2-7 complex. The complex forms a toroidal hexameric ring with the proposed subunit order MCM2-MCM6-MCM4-MCM7-MCM3-MCM5. Component of the CMG helicase complex, a hexameric ring of related MCM2-7 subunits stabilized by CDC45 and the tetrameric GINS complex. May interact with MCM10. Interacts with TIPIN. Interacts with CDT1. Interacts with MCMBP. Interacts with DDI2. O-glycosylated (O-GlcNAcylated), in a cell cycle-dependent manner.

The protein resides in the nucleus. The protein localises to the chromosome. The enzyme catalyses ATP + H2O = ADP + phosphate + H(+). Its function is as follows. Acts as a component of the MCM2-7 complex (MCM complex) which is the replicative helicase essential for 'once per cell cycle' DNA replication initiation and elongation in eukaryotic cells. Core component of CDC45-MCM-GINS (CMG) helicase, the molecular machine that unwinds template DNA during replication, and around which the replisome is built. The active ATPase sites in the MCM2-7 ring are formed through the interaction surfaces of two neighboring subunits such that a critical structure of a conserved arginine finger motif is provided in trans relative to the ATP-binding site of the Walker A box of the adjacent subunit. The six ATPase active sites, however, are likely to contribute differentially to the complex helicase activity. The polypeptide is DNA replication licensing factor MCM6 (MCM6) (Bos taurus (Bovine)).